Here is an 82-residue protein sequence, read N- to C-terminus: Nuclear protein 1 (82 aa).

The interval 1-82 is disordered; sequence MATFPPATSA…SERKKRGARR (82 aa). The segment covering 17 to 28 has biased composition (acidic residues); it reads PEDEDSSLDESD. The Nuclear localization signal signature appears at 65–82; that stretch reads KLVTKLQNSERKKRGARR.

The protein belongs to the NUPR family. As to quaternary structure, monomer. Directly interacts with MSL1 and binds MORF4L1, two components of histone acetyltransferase complex; the interaction with MORF4L1 may be mediated by MSL1. Interacts with EP300; this interaction enhances the effect of EP300 on PAX2 transcription factor activity. Interacts with PAXIP1; this interaction prevents PAXIP1 inhibition of PAX2 transcription factor activity. Interacts with COPS5; this interaction allows COPS5-dependent CDKN1B nuclear to cytoplasm translocation. Interacts with RNF2. Interacts with FOXO3; this interaction represses FOXO3 transactivation. Interacts with PTMA; negatively regulates apoptotic process. Interacts with MYOD1, EP300 and DDX5; this interaction coordinates the association of anti-proliferative and pro-myogenic proteins at the myogenin promoter. Interacts with TP53; interaction is stress-dependent. Forms a complex with EP300 and TP53; this complex binds CDKN1A promoter leading to transcriptional induction of CDKN1A. Post-translationally, phosphorylated in vitro by PKA and CK. Phosphorylation promotes DNA-binding activity. In terms of processing, acetylated by EP300 in vitro. In terms of tissue distribution, widely expressed, with high levels in liver, pancreas, prostate, ovary, colon, thyroid, spinal cord, trachea and adrenal gland, moderate levels in heart, placenta, lung, skeletal muscle, kidney, testis, small intestine, stomach and lymph node, and low levels in brain, spleen, thymus and bone marrow. Not detected in peripheral blood leukocytes.

The protein localises to the nucleus. It localises to the cytoplasm. The protein resides in the perinuclear region. Its function is as follows. Transcription regulator that converts stress signals into a program of gene expression that empowers cells with resistance to the stress induced by a change in their microenvironment. Thereby participates in the regulation of many processes namely cell-cycle, apoptosis, autophagy and DNA repair responses. Controls cell cycle progression and protects cells from genotoxic stress induced by doxorubicin through the complex formation with TP53 and EP300 that binds CDKN1A promoter leading to transcriptional induction of CDKN1A. Protects pancreatic cancer cells from stress-induced cell death by binding the RELB promoter and activating its transcription, leading to IER3 transactivation. Negatively regulates apoptosis through interaction with PTMA. Inhibits autophagy-induced apoptosis in cardiac cells through FOXO3 interaction, inducing cytoplasmic translocation of FOXO3 thereby preventing the FOXO3 association with the pro-autophagic BNIP3 promoter. Inhibits cell growth and facilitates programmed cell death by apoptosis after adriamycin-induced DNA damage through transactivation of TP53. Regulates methamphetamine-induced apoptosis and autophagy through DDIT3-mediated endoplasmic reticulum stress pathway. Participates in DNA repair following gamma-irradiation by facilitating DNA access of the transcription machinery through interaction with MSL1 leading to inhibition of histone H4' Lys-16' acetylation (H4K16ac). Coactivator of PAX2 transcription factor activity, both by recruiting EP300 to increase PAX2 transcription factor activity and by binding PAXIP1 to suppress PAXIP1-induced inhibition on PAX2. Positively regulates cell cycle progression through interaction with COPS5 inducing cytoplasmic translocation of CDKN1B leading to the CDKN1B degradation. Coordinates, through its interaction with EP300, the assiociation of MYOD1, EP300 and DDX5 to the MYOG promoter, leading to inhibition of cell-cycle progression and myogenic differentiation promotion. Negatively regulates beta cell proliferation via inhibition of cell-cycle regulatory genes expression through the suppression of their promoter activities. Also required for LHB expression and ovarian maturation. Exacerbates CNS inflammation and demyelination upon cuprizone treatment. This is Nuclear protein 1 from Homo sapiens (Human).